The following is a 247-amino-acid chain: PABIR family member 2 (247 aa).

The interval 1–23 (MAQEKMELDLEPDTSYGGTLRRS) is disordered. Ala-2 carries the N-acetylalanine modification. Phosphoserine occurs at positions 25, 33, 50, 58, and 63. The segment at 82–104 (ISQSWDESLSLSDSDFDKPEKLY) is disordered. Residues 83 to 94 (SQSWDESLSLSD) are compositionally biased toward low complexity. Thr-112 bears the Phosphothreonine mark. Phosphoserine occurs at positions 115 and 119. Residue Arg-122 is modified to Omega-N-methylarginine. Disordered stretches follow at residues 129–152 (VSSS…SQSP), 158–177 (PSVL…SQPK), and 202–230 (DILD…SPVA). Ser-137 and Ser-141 each carry phosphoserine. Basic and acidic residues predominate over residues 166 to 176 (RKGEMETESQP). Residues 202 to 216 (DILDGSSSSSGLSSD) show a composition bias toward low complexity.

The protein belongs to the FAM122 family. Isoform 3 and isoform 4 are phosphorylated on Ser-62 and Ser-64.

The protein is PABIR family member 2 of Homo sapiens (Human).